Consider the following 90-residue polypeptide: Putative sodium channel toxin Ts28 (90 aa).

Residues 1 to 23 (MKISLVTWLITALCLMEIEEIDG) form the signal peptide. Residues 26-86 (PGNYPVDFQG…FWDVMKKQCD (61 aa)) form the LCN-type CS-alpha/beta domain. Intrachain disulfides connect Cys-40-Cys-60, Cys-46-Cys-65, and Cys-50-Cys-67.

This sequence belongs to the long (3 C-C) scorpion toxin superfamily. Monomer (edited version) and heterodimer (non-edited version) of this alpha chain and a beta chain (AC P0CI43). Expressed by the venom gland.

It localises to the secreted. The edited BmKBTx-like may modulate voltage-gated sodium channels (Nav). Functionally, the non-edited form is able to form a heterodimer. In orthologs, a heterodimer with LVP beta-chain induces lipolysis in rat adipocytes, which is mediated through the beta-2 adrenergic receptor pathway (ADRB2). Since no LVP beta-chains have been identified in the venom of this scorpion, it is possible that this protein is not involved in a lipolysis process. This is Putative sodium channel toxin Ts28 from Tityus serrulatus (Brazilian scorpion).